The following is a 466-amino-acid chain: Asparagine--tRNA ligase (466 aa).

This sequence belongs to the class-II aminoacyl-tRNA synthetase family. Homodimer.

Its subcellular location is the cytoplasm. It carries out the reaction tRNA(Asn) + L-asparagine + ATP = L-asparaginyl-tRNA(Asn) + AMP + diphosphate + H(+). This is Asparagine--tRNA ligase from Salmonella typhimurium (strain LT2 / SGSC1412 / ATCC 700720).